We begin with the raw amino-acid sequence, 68 residues long: Conotoxin phi-MiXXVIIB (68 aa).

The signal sequence occupies residues 1-29; that stretch reads MRFFFLLLTVALFLTSITGDDAERMLGMK. The propeptide occupies 30–35; that stretch reads EGGYVR. 4 cysteine pairs are disulfide-bonded: Cys-38-Cys-49, Cys-42-Cys-51, Cys-45-Cys-56, and Cys-50-Cys-61. Residue Pro-44 is modified to 4-hydroxyproline.

Belongs to the conotoxin G2 superfamily. 1 family. Expressed by the venom duct.

The protein resides in the secreted. This peptide promotes cell proliferation (EC(50)=17.85 uM) and inhibits apoptosis (EC(50)=2.2 uM). This Conus miles (Soldier cone) protein is Conotoxin phi-MiXXVIIB.